Here is a 298-residue protein sequence, read N- to C-terminus: Acetylglutamate kinase (298 aa).

Residues G68–G69, R90, and N195 each bind substrate.

This sequence belongs to the acetylglutamate kinase family. ArgB subfamily.

Its subcellular location is the cytoplasm. It catalyses the reaction N-acetyl-L-glutamate + ATP = N-acetyl-L-glutamyl 5-phosphate + ADP. Its pathway is amino-acid biosynthesis; L-arginine biosynthesis; N(2)-acetyl-L-ornithine from L-glutamate: step 2/4. Catalyzes the ATP-dependent phosphorylation of N-acetyl-L-glutamate. The protein is Acetylglutamate kinase of Hydrogenovibrio crunogenus (strain DSM 25203 / XCL-2) (Thiomicrospira crunogena).